Here is a 480-residue protein sequence, read N- to C-terminus: UDP-glycosyltransferase 708D1 (480 aa).

Histidine 20 acts as the Proton acceptor in catalysis. Histidine 20 contributes to the an anthocyanidin binding site. Catalysis depends on aspartate 118, which acts as the Charge relay. Threonine 141 is a UDP-alpha-D-glucose binding site. The segment at 291–292 (NR) is UDP. UDP-alpha-D-glucose is bound by residues valine 354, glutamine 356, histidine 371, tryptophan 374, asparagine 375, serine 376, glutamate 379, aspartate 395, and glutamine 396.

Belongs to the UDP-glycosyltransferase family.

The enzyme catalyses a 3'-hydro-2'-hydroxy-beta-oxodihydrochalcone + UDP-alpha-D-glucose = a 3'-(beta-D-glucopyranosyl)-2'-hydroxy-beta-oxodihydrochalcone + UDP + H(+). UDP-glucose-dependent glucosyltransferase catalyzing the c-glucosylation of the A ring of 2-hydroxynaringenin. Also active toward phloretin, but not toward naringenin and apigenin. The sequence is that of UDP-glycosyltransferase 708D1 from Glycine max (Soybean).